The chain runs to 348 residues: D-erythrose-4-phosphate dehydrogenase (348 aa).

NAD(+) contacts are provided by residues 12–13 (RI) and arginine 81. Substrate contacts are provided by residues 154–156 (SCT), arginine 200, 213–214 (TK), and arginine 236. Catalysis depends on cysteine 155, which acts as the Nucleophile. Residue asparagine 318 participates in NAD(+) binding.

Belongs to the glyceraldehyde-3-phosphate dehydrogenase family. Epd subfamily. Homotetramer.

It is found in the cytoplasm. The enzyme catalyses D-erythrose 4-phosphate + NAD(+) + H2O = 4-phospho-D-erythronate + NADH + 2 H(+). Its pathway is cofactor biosynthesis; pyridoxine 5'-phosphate biosynthesis; pyridoxine 5'-phosphate from D-erythrose 4-phosphate: step 1/5. Functionally, catalyzes the NAD-dependent conversion of D-erythrose 4-phosphate to 4-phosphoerythronate. The chain is D-erythrose-4-phosphate dehydrogenase from Salmonella schwarzengrund (strain CVM19633).